The sequence spans 294 residues: Protoheme IX farnesyltransferase (294 aa).

The next 9 membrane-spanning stretches (helical) occupy residues 24–44 (VVLL…PGWV), 48–68 (LIAF…AINH), 96–116 (ALWF…LFVN), 118–138 (LTAL…TGYL), 146–166 (IVIG…AVTG), 172–192 (ALLL…ALAI), 224–244 (VLLL…WIYL), 245–265 (LGAL…YFTD), and 268–288 (VVAM…FVFL).

The protein belongs to the UbiA prenyltransferase family. Protoheme IX farnesyltransferase subfamily.

It localises to the cell inner membrane. The enzyme catalyses heme b + (2E,6E)-farnesyl diphosphate + H2O = Fe(II)-heme o + diphosphate. The protein operates within porphyrin-containing compound metabolism; heme O biosynthesis; heme O from protoheme: step 1/1. In terms of biological role, converts heme B (protoheme IX) to heme O by substitution of the vinyl group on carbon 2 of heme B porphyrin ring with a hydroxyethyl farnesyl side group. The sequence is that of Protoheme IX farnesyltransferase from Legionella pneumophila (strain Paris).